A 100-amino-acid chain; its full sequence is Small ribosomal subunit protein uS14c (100 aa).

The protein belongs to the universal ribosomal protein uS14 family. In terms of assembly, part of the 30S ribosomal subunit.

The protein localises to the plastid. It localises to the chloroplast. In terms of biological role, binds 16S rRNA, required for the assembly of 30S particles. In Rhodomonas salina (Cryptomonas salina), this protein is Small ribosomal subunit protein uS14c.